We begin with the raw amino-acid sequence, 542 residues long: Phosphoacetylglucosamine mutase (542 aa).

Met-1 is subject to N-acetylmethionine. Residue Thr-62 is modified to Phosphothreonine. Residue Ser-64 is the Phosphoserine intermediate of the active site. The Mg(2+) site is built by Ser-64, Asp-276, Asp-278, and Asp-280. A Phosphoserine modification is found at Ser-64. Residues Glu-370–Asn-372, Arg-496–Thr-500, and Arg-505 each bind substrate.

Belongs to the phosphohexose mutase family. Mg(2+) is required as a cofactor.

It carries out the reaction N-acetyl-alpha-D-glucosamine 1-phosphate = N-acetyl-D-glucosamine 6-phosphate. It functions in the pathway nucleotide-sugar biosynthesis; UDP-N-acetyl-alpha-D-glucosamine biosynthesis; N-acetyl-alpha-D-glucosamine 1-phosphate from alpha-D-glucosamine 6-phosphate (route I): step 2/2. Catalyzes the conversion of GlcNAc-6-P into GlcNAc-1-P during the synthesis of uridine diphosphate/UDP-GlcNAc, a sugar nucleotide critical to multiple glycosylation pathways including protein N- and O-glycosylation. The polypeptide is Phosphoacetylglucosamine mutase (Mus musculus (Mouse)).